The chain runs to 234 residues: DEAD-box ATP-dependent RNA helicase 3 (234 aa).

A Q motif motif is present at residues 120-148 (LAVSRLGLPQKLVETLEKRGITKLFPIQR). The region spanning 151 to 234 (LVPALEGRDI…RTVCVYGGVS (84 aa)) is the Helicase ATP-binding domain. 164–171 (AKTGTGKT) is an ATP binding site.

It belongs to the DEAD box helicase family. DDX21/DDX50 subfamily.

The polypeptide is DEAD-box ATP-dependent RNA helicase 3 (Helianthus annuus (Common sunflower)).